Here is a 39-residue protein sequence, read N- to C-terminus: Conotoxin ArMSGL-013 (39 aa).

Residues 1–5 (RRSLT) constitute a propeptide that is removed on maturation. Cystine bridges form between Cys12/Cys24, Cys16/Cys33, and Cys23/Cys37. The residue at position 38 (Trp38) is a Tryptophan amide.

It belongs to the conotoxin O3 superfamily. In terms of tissue distribution, expressed by the venom duct.

It is found in the secreted. The sequence is that of Conotoxin ArMSGL-013 from Conus arenatus (Sand-dusted cone).